We begin with the raw amino-acid sequence, 260 residues long: Small ribosomal subunit protein uS2 (260 aa).

The protein belongs to the universal ribosomal protein uS2 family.

The protein is Small ribosomal subunit protein uS2 of Gluconacetobacter diazotrophicus (strain ATCC 49037 / DSM 5601 / CCUG 37298 / CIP 103539 / LMG 7603 / PAl5).